The chain runs to 270 residues: Phosphatidylglycerol--prolipoprotein diacylglyceryl transferase (270 aa).

The next 7 membrane-spanning stretches (helical) occupy residues 17–37 (LAIRWYGLMYLAGFIMFLWFG), 59–79 (MLFYGVLGVILGGRLGYVLFY), 95–115 (WEGGMAFHGGFLGVLIAMWVF), 129–149 (FIAPMIPCGLAAGRIGNFING), 175–195 (PSQLYQFAGEGVALFIILWLF), 202–222 (MGAVSGVFLIGYGAFRFLAEF), and 237–257 (LSMGQWLSLPMIVIGAVMVVW). Arg-142 lines the a 1,2-diacyl-sn-glycero-3-phospho-(1'-sn-glycerol) pocket.

Belongs to the Lgt family.

The protein resides in the cell inner membrane. The enzyme catalyses L-cysteinyl-[prolipoprotein] + a 1,2-diacyl-sn-glycero-3-phospho-(1'-sn-glycerol) = an S-1,2-diacyl-sn-glyceryl-L-cysteinyl-[prolipoprotein] + sn-glycerol 1-phosphate + H(+). Its pathway is protein modification; lipoprotein biosynthesis (diacylglyceryl transfer). Catalyzes the transfer of the diacylglyceryl group from phosphatidylglycerol to the sulfhydryl group of the N-terminal cysteine of a prolipoprotein, the first step in the formation of mature lipoproteins. The polypeptide is Phosphatidylglycerol--prolipoprotein diacylglyceryl transferase (Cupriavidus metallidurans (strain ATCC 43123 / DSM 2839 / NBRC 102507 / CH34) (Ralstonia metallidurans)).